Reading from the N-terminus, the 229-residue chain is UPF0758 protein MM_2791 (229 aa).

The region spanning 106 to 228 is the MPN domain; the sequence is KISSPKDVYT…YVSLKDEGFV (123 aa). 3 residues coordinate Zn(2+): His-177, His-179, and Asp-190. Residues 177 to 190 carry the JAMM motif motif; sequence HNHPSGDPSPSRED.

The protein belongs to the UPF0758 family.

The chain is UPF0758 protein MM_2791 from Methanosarcina mazei (strain ATCC BAA-159 / DSM 3647 / Goe1 / Go1 / JCM 11833 / OCM 88) (Methanosarcina frisia).